Reading from the N-terminus, the 191-residue chain is Crossover junction endodeoxyribonuclease RuvC (191 aa).

Residues Asp7, Glu67, and Asp140 contribute to the active site. Mg(2+) is bound by residues Asp7, Glu67, and Asp140.

Belongs to the RuvC family. As to quaternary structure, homodimer which binds Holliday junction (HJ) DNA. The HJ becomes 2-fold symmetrical on binding to RuvC with unstacked arms; it has a different conformation from HJ DNA in complex with RuvA. In the full resolvosome a probable DNA-RuvA(4)-RuvB(12)-RuvC(2) complex forms which resolves the HJ. It depends on Mg(2+) as a cofactor.

It localises to the cytoplasm. It catalyses the reaction Endonucleolytic cleavage at a junction such as a reciprocal single-stranded crossover between two homologous DNA duplexes (Holliday junction).. Functionally, the RuvA-RuvB-RuvC complex processes Holliday junction (HJ) DNA during genetic recombination and DNA repair. Endonuclease that resolves HJ intermediates. Cleaves cruciform DNA by making single-stranded nicks across the HJ at symmetrical positions within the homologous arms, yielding a 5'-phosphate and a 3'-hydroxyl group; requires a central core of homology in the junction. The consensus cleavage sequence is 5'-(A/T)TT(C/G)-3'. Cleavage occurs on the 3'-side of the TT dinucleotide at the point of strand exchange. HJ branch migration catalyzed by RuvA-RuvB allows RuvC to scan DNA until it finds its consensus sequence, where it cleaves and resolves the cruciform DNA. In Pelodictyon phaeoclathratiforme (strain DSM 5477 / BU-1), this protein is Crossover junction endodeoxyribonuclease RuvC.